A 2375-amino-acid chain; its full sequence is Talin-2 (2375 aa).

The FERM domain maps to 88–406; sequence RPQKIRMLDG…GYIDIILKKK (319 aa). An interaction with PIP5K1C region spans residues 312 to 406; it reads GVSFFLVKEK…GYIDIILKKK (95 aa). Serine 428, serine 450, serine 624, and serine 1024 each carry phosphoserine. Phosphotyrosine is present on tyrosine 1666. The region spanning 2205 to 2375 is the I/LWEQ domain; it reads TEWVDPEDPT…KRLQAAGNAV (171 aa).

Interacts directly with PIP5K1C.

It localises to the cytoplasm. It is found in the cell junction. The protein localises to the focal adhesion. The protein resides in the synapse. Its subcellular location is the cell membrane. It localises to the cytoskeleton. Its function is as follows. As a major component of focal adhesion plaques that links integrin to the actin cytoskeleton, may play an important role in cell adhesion. Recruits PIP5K1C to focal adhesion plaques and strongly activates its kinase activity. The protein is Talin-2 (Tln2) of Mus musculus (Mouse).